An 813-amino-acid polypeptide reads, in one-letter code: Molybdenum cofactor sulfurase (813 aa).

Lysine 228 is subject to N6-(pyridoxal phosphate)lysine. The active site involves cysteine 391. Positions 625–670 (PSLRHAKAHMQKHQGPKRSAAIEKSSAHSFHDPPTPPDSDSENRKR) are disordered. Residues 628 to 640 (RHAKAHMQKHQGP) are compositionally biased toward basic residues. Residues 648 to 812 (KSSAHSFHDP…IKVGDKVSIG (165 aa)) form the MOSC domain.

The protein belongs to the class-V pyridoxal-phosphate-dependent aminotransferase family. MOCOS subfamily. The cofactor is pyridoxal 5'-phosphate.

The enzyme catalyses Mo-molybdopterin + L-cysteine + AH2 = thio-Mo-molybdopterin + L-alanine + A + H2O. Sulfurates the molybdenum cofactor. Sulfation of molybdenum is essential for xanthine dehydrogenase (XDH) and aldehyde oxidase (ADO) enzymes in which molybdenum cofactor is liganded by 1 oxygen and 1 sulfur atom in active form. The protein is Molybdenum cofactor sulfurase of Botryotinia fuckeliana (strain B05.10) (Noble rot fungus).